The primary structure comprises 315 residues: Ribosomal RNA small subunit methyltransferase H (315 aa).

S-adenosyl-L-methionine-binding positions include 37–39 (GGH), Asp-57, Leu-91, Asp-105, and Gln-112.

Belongs to the methyltransferase superfamily. RsmH family.

Its subcellular location is the cytoplasm. It catalyses the reaction cytidine(1402) in 16S rRNA + S-adenosyl-L-methionine = N(4)-methylcytidine(1402) in 16S rRNA + S-adenosyl-L-homocysteine + H(+). Specifically methylates the N4 position of cytidine in position 1402 (C1402) of 16S rRNA. The polypeptide is Ribosomal RNA small subunit methyltransferase H (Syntrophus aciditrophicus (strain SB)).